We begin with the raw amino-acid sequence, 562 residues long: NRAMP-like transporter smf-1 (562 aa).

Residues 1–55 are Cytoplasmic-facing; sequence MASSNNDGPIEPEAEPWRITQNDHLEQDLLEEDAESQERVDIPVDDVEKAFSFKK. Residues 56-76 form a helical membrane-spanning segment; that stretch reads LWAFTGPGFLMSIAYLDPGNI. Residues 77–83 are Extracellular-facing; it reads ESDLQSG. Residues 84-104 form a helical membrane-spanning segment; that stretch reads AQAAYKLLWVLLSAHIIGMLL. Over 105 to 140 the chain is Cytoplasmic; that stretch reads QRMSARLGVVSGKHMAEVAYQFYPRLPRIILWLMIE. The helical transmembrane segment at 141–161 threads the bilayer; it reads IAIVCSDMQEVIGTAIAIFLL. Residues 162-164 lie on the Extracellular side of the membrane; it reads SKG. The chain crosses the membrane as a helical span at residues 165-185; that stretch reads FVPLYVGVFITILDTFTFLLI. At 186 to 194 the chain is on the cytoplasmic side; that stretch reads DRYGIRKLE. The helical transmembrane segment at 195 to 215 threads the bilayer; that stretch reads LIFGFLILTMTVSFGYEFVVV. Over 216–241 the chain is Extracellular; it reads KPPIGEVISGMVVPWCAGCGKGEFMQ. A helical transmembrane segment spans residues 242 to 262; it reads AISVVGAVIMPHNLYLHSALV. The Cytoplasmic portion of the chain corresponds to 263–287; it reads KSRRVDRKDRRRVAEANKYFTLESA. Residues 288 to 308 traverse the membrane as a helical segment; it reads IALFLSFFINLFVVAVFAHGL. Residues 309–347 lie on the Extracellular side of the membrane; the sequence is YQKTNADVREMCIARHDIPDADIFPNNTEPVEVDIYKGG. The N-linked (GlcNAc...) asparagine glycan is linked to Asn334. The helical transmembrane segment at 348–368 threads the bilayer; sequence IYLGCQFGAIAMFIWGIGIFA. The Cytoplasmic segment spans residues 369 to 398; it reads AGQSSTMTGTYTGQFVMEGFVKIEWPKWKR. The chain crosses the membrane as a helical span at residues 399–419; that stretch reads VLITRAIAITPTLVLTFYSQG. The Extracellular segment spans residues 420 to 428; the sequence is VQNLTGMND. A glycan (N-linked (GlcNAc...) asparagine) is linked at Asn422. Residues 429–449 traverse the membrane as a helical segment; sequence FLNCVQMIQLPFALIPIITFT. Residues 450–462 lie on the Cytoplasmic side of the membrane; that stretch reads SSRKIMHDFRSSK. A helical membrane pass occupies residues 463–483; the sequence is VFQIFALITSALILSINVYFI. Residues 484–496 lie on the Extracellular side of the membrane; the sequence is SDYVFSRLGSEWY. The chain crosses the membrane as a helical span at residues 497 to 517; sequence IIMVLAPITFAYVLFVLYLAL. The Cytoplasmic portion of the chain corresponds to 518-562; it reads YCLVSCEIIPDTVSIRGFSFNKSYENDAPWLAVDSSAVHDNAGYQ.

The protein belongs to the NRAMP family. Expressed in dopaminergic neurons (at protein level). Expressed predominantly in anterior and posterior intestine, rectal gland cell, H-shaped excretory cell, vulva cells, proximal uterus and spermatheca in adults. Weakly expressed in hyp7 hypodermis, pharyngeal muscles and some anterior sensory, ring and posterior head neurons in adults. Expressed in the anchor cell at the larval stage.

It is found in the apical cell membrane. Its subcellular location is the cytoplasmic vesicle membrane. Functionally, probable divalent metal ion transporter which regulates Mn(2+) uptake. This is NRAMP-like transporter smf-1 (smf-1) from Caenorhabditis elegans.